A 326-amino-acid chain; its full sequence is Palmitoyltransferase SWF1 (326 aa).

Methionine 1 is a topological domain (lumenal). A helical membrane pass occupies residues 2 to 22 (MGALCALAVTQAGLILAAPAL). Residues 23 to 49 (RAYWPFSWYYHVVFRTVLQDTQRHRWK) are Cytoplasmic-facing. A helical transmembrane segment spans residues 50 to 70 (YWATPAFYAGVYAYCVWLFYG). The Lumenal segment spans residues 71–85 (EVYAEIAKALWVPER). The chain crosses the membrane as a helical span at residues 86-106 (WVLPAAVVAPAAAGVAAAATP). The Cytoplasmic segment spans residues 107-164 (AAVPADAAYDGLLFHDGVECRTCRVRKPARSRHCGVCGRCVPLADHHCVWLNNCVGRG). Residues 124–174 (VECRTCRVRKPARSRHCGVCGRCVPLADHHCVWLNNCVGRGNYGLFYLALG) enclose the DHHC domain. A helical transmembrane segment spans residues 165–185 (NYGLFYLALGAHCALLTYGAV). At 186–198 (RLPLAAPAGRWPR) the chain is on the lumenal side. Residues 199-219 (ALLALELLVASFAVLCVWFTA) traverse the membrane as a helical segment. At 220–326 (TQVALVRDGM…RIFRRRVRGL (107 aa)) the chain is on the cytoplasmic side.

Belongs to the DHHC palmitoyltransferase family. SWF1 subfamily.

It localises to the endoplasmic reticulum membrane. It carries out the reaction L-cysteinyl-[protein] + hexadecanoyl-CoA = S-hexadecanoyl-L-cysteinyl-[protein] + CoA. Palmitoyltransferase that targets several endosomal SNAREs. Palmitoylates the SNAREs at cysteine residues close to the cytoplasmic end of their transmembrane domain. May have a role in the cellular quality control of transmembrane domain-containing proteins. This is Palmitoyltransferase SWF1 (SWF1) from Eremothecium gossypii (strain ATCC 10895 / CBS 109.51 / FGSC 9923 / NRRL Y-1056) (Yeast).